A 166-amino-acid polypeptide reads, in one-letter code: Protein-export protein SecB (166 aa).

Belongs to the SecB family. As to quaternary structure, homotetramer, a dimer of dimers. One homotetramer interacts with 1 SecA dimer.

It is found in the cytoplasm. In terms of biological role, one of the proteins required for the normal export of preproteins out of the cell cytoplasm. It is a molecular chaperone that binds to a subset of precursor proteins, maintaining them in a translocation-competent state. It also specifically binds to its receptor SecA. The protein is Protein-export protein SecB of Actinobacillus pleuropneumoniae serotype 7 (strain AP76).